Consider the following 157-residue polypeptide: Protein Smg (157 aa).

It belongs to the Smg family.

This chain is Protein Smg, found in Enterobacter sp. (strain 638).